A 359-amino-acid polypeptide reads, in one-letter code: Peptide chain release factor 1 (359 aa).

Gln-235 carries the post-translational modification N5-methylglutamine. The disordered stretch occupies residues 285–305; that stretch reads KRDSEISQMRKSQIGSGDRSE. The span at 290-299 shows a compositional bias: polar residues; it reads ISQMRKSQIG.

It belongs to the prokaryotic/mitochondrial release factor family. Post-translationally, methylated by PrmC. Methylation increases the termination efficiency of RF1.

It is found in the cytoplasm. Peptide chain release factor 1 directs the termination of translation in response to the peptide chain termination codons UAG and UAA. This is Peptide chain release factor 1 from Ehrlichia canis (strain Jake).